The following is a 290-amino-acid chain: ATP synthase subunit a (290 aa).

6 helical membrane passes run 44 to 64 (AFHV…ILLF), 104 to 124 (VIAP…AIDL), 161 to 181 (LSVF…GGFI), 194 to 214 (ILVQ…TLVA), 233 to 253 (VFIL…GMGV), and 260 to 280 (AVFH…LTIV).

This sequence belongs to the ATPase A chain family. As to quaternary structure, F-type ATPases have 2 components, CF(1) - the catalytic core - and CF(0) - the membrane proton channel. CF(1) has five subunits: alpha(3), beta(3), gamma(1), delta(1), epsilon(1). CF(0) has three main subunits: a(1), b(2) and c(9-12). The alpha and beta chains form an alternating ring which encloses part of the gamma chain. CF(1) is attached to CF(0) by a central stalk formed by the gamma and epsilon chains, while a peripheral stalk is formed by the delta and b chains.

It localises to the cell inner membrane. In terms of biological role, key component of the proton channel; it plays a direct role in the translocation of protons across the membrane. In Pseudomonas fluorescens (strain ATCC BAA-477 / NRRL B-23932 / Pf-5), this protein is ATP synthase subunit a.